We begin with the raw amino-acid sequence, 144 residues long: Small polypeptide DEVIL 18 (144 aa).

Over residues 30 to 58 (SFSTKTSSSSSKPVFTRSFSTKPTSYSSS) the composition is skewed to low complexity. Residues 30–89 (SFSTKTSSSSSKPVFTRSFSTKPTSYSSSEPIFRRSFSAKPTSSKSPFLSRSGSTKCPVD) form a disordered region. Residues 42 to 58 (PVFTRSFSTKPTSYSSS) traverse the membrane as a helical segment. The segment covering 68-84 (AKPTSSKSPFLSRSGST) has biased composition (polar residues). The segment at 108-139 (SVTRKCRNMAKEHKSRFYIMKRCVLMLVCWHK) is required for DVL/RTFL small polypeptide activity.

This sequence belongs to the DVL/RTFL small polypeptides family.

The protein localises to the cell membrane. Functionally, small polypeptide acting as a regulatory molecule which coordinates cellular responses required for differentiation, growth and development, probably by restricting polar cell proliferation in lateral organs and coordinating socket cell recruitment and differentiation at trichome sites. In Arabidopsis thaliana (Mouse-ear cress), this protein is Small polypeptide DEVIL 18.